The sequence spans 320 residues: Lipoyl synthase (320 aa).

Cys66, Cys71, Cys77, Cys92, Cys96, Cys99, and Ser306 together coordinate [4Fe-4S] cluster. Positions 77 to 295 constitute a Radical SAM core domain; sequence CFGHGTATFM…AEIGYAMGFS (219 aa).

The protein belongs to the radical SAM superfamily. Lipoyl synthase family. [4Fe-4S] cluster is required as a cofactor.

Its subcellular location is the cytoplasm. The enzyme catalyses [[Fe-S] cluster scaffold protein carrying a second [4Fe-4S](2+) cluster] + N(6)-octanoyl-L-lysyl-[protein] + 2 oxidized [2Fe-2S]-[ferredoxin] + 2 S-adenosyl-L-methionine + 4 H(+) = [[Fe-S] cluster scaffold protein] + N(6)-[(R)-dihydrolipoyl]-L-lysyl-[protein] + 4 Fe(3+) + 2 hydrogen sulfide + 2 5'-deoxyadenosine + 2 L-methionine + 2 reduced [2Fe-2S]-[ferredoxin]. It participates in protein modification; protein lipoylation via endogenous pathway; protein N(6)-(lipoyl)lysine from octanoyl-[acyl-carrier-protein]: step 2/2. Its function is as follows. Catalyzes the radical-mediated insertion of two sulfur atoms into the C-6 and C-8 positions of the octanoyl moiety bound to the lipoyl domains of lipoate-dependent enzymes, thereby converting the octanoylated domains into lipoylated derivatives. This is Lipoyl synthase from Thioalkalivibrio sulfidiphilus (strain HL-EbGR7).